Consider the following 202-residue polypeptide: Syndecan-4 (202 aa).

The first 22 residues, 1–22, serve as a signal peptide directing secretion; it reads MASPRLLALLLLLVGAFNAAAA. Over 23–152 the chain is Extracellular; the sequence is ESIRETEVIN…NIFERTEVLS (130 aa). Disordered regions lie at residues 41-75 and 87-112; these read YFSG…GPED and VPLD…ELEE. The O-linked (Xyl...) (glycosaminoglycan) serine glycan is linked to serine 43. The span at 46-63 shows a compositional bias: acidic residues; the sequence is LPDDEDVGGPGQEPDDFE. Serine 65 and serine 67 each carry an O-linked (Xyl...) (glycosaminoglycan) serine glycan. The helical transmembrane segment at 153 to 173 threads the bilayer; sequence ALIVGGIVGILFAVFLVLLLV. Over 174-202 the chain is Cytoplasmic; that stretch reads YRMKKKDEGSYDLGKKPIYKKAPTNEFYA.

The protein belongs to the syndecan proteoglycan family. As to quaternary structure, homodimer. Interacts with CDCP1 and SDCBP. Interacts (via its cytoplasmic domain) with GIPC (via its PDZ domain). Interacts (via its cytoplasmic domain) with NUDT16L1. Interacts with DNM2; this interaction is markedly enhanced at focal ahesion site upon induction of focal adhesions and stress-fiber formation. In terms of processing, shedding, cleavage of the extracellular domain to release a soluble form, is enhanced by a number of factors such as heparanase, growth factor receptor action for example by thrombin or EGF. Physiological events such as stress or wound healing can activate the shedding. PMA-mediated shedding is inhibited by TIMP3. Post-translationally, O-glycosylated; contains both chondroitin sulfate and heparan sulfate. Ser-43, Ser-65 and Ser-67 can all be modified by either chondroitin sulfate or heparan sulfate, and the protein exists in forms that contain only chondroitin sulfate, only heparan sulfate and both chondroitin sulfate and heparan sulfate.

Its subcellular location is the membrane. The protein localises to the secreted. Its function is as follows. Cell surface proteoglycan which regulates exosome biogenesis in concert with SDCBP and PDCD6IP. The protein is Syndecan-4 of Sus scrofa (Pig).